The sequence spans 262 residues: Urease accessory protein UreD (262 aa).

This sequence belongs to the UreD family. As to quaternary structure, ureD, UreF and UreG form a complex that acts as a GTP-hydrolysis-dependent molecular chaperone, activating the urease apoprotein by helping to assemble the nickel containing metallocenter of UreC. The UreE protein probably delivers the nickel.

Its subcellular location is the cytoplasm. Required for maturation of urease via the functional incorporation of the urease nickel metallocenter. This is Urease accessory protein UreD from Acetivibrio thermocellus (strain ATCC 27405 / DSM 1237 / JCM 9322 / NBRC 103400 / NCIMB 10682 / NRRL B-4536 / VPI 7372) (Clostridium thermocellum).